A 572-amino-acid chain; its full sequence is MFKQTFKVNIIPTQPFEGQKPGTSGLRKKVTEVMKTNYLGNFVQSIFNALPEDKLKGSTIVVGGDGRYYNNDAIQLIFQIAAANGVGKILVGRYGLLSTPAISAIVRARSALGAIILTASHNPGGPNGDFGIKYNMSNGGPAPESITNAIYKHTTSITQIKTTRNVSVDNLGLLKTYEWNDGEFVIEVIDSADDYVSLLKTIFDFDGIRKFVKNHPNFTFNFDAMSGVTGAYGKRIFTDELGIPESCLINCNPSQDFNGGHPDPNLTYAPLLVKKMNNGEFDMGCASDGDGDRNMILGKRFFLNPSDSVAVIASNYKAIPYFNKGGLKGLARSMPTSAALERVATDLKVPFFEVPTGWKFFGNLMDAGTLSICGEESFGTGSDHIREKDGIWAIICWLQILTHHNQSTNDKNFVSIEEIVKQHWAKYGRNYYSRYDYEEIDTAPAEAMMKHVSQQIESKQLIGKKFTGISDSLEYEIASCDDFEYKDPIDSSVSSHQGLRIIFTDGSRIIYRLSGTGSTGATVRVYFDKYETQPTQLNNDVQTHLKSLIHIALVEISKLNHYTGRNEPNVIT.

Residues Thr-23, Arg-27, 120-121 (SH), and Lys-133 contribute to the substrate site. Ser-120 acts as the Phosphoserine intermediate in catalysis. Position 120 (Ser-120) interacts with Mg(2+). Mg(2+) contacts are provided by Asp-288, Asp-290, and Asp-292. Substrate is bound by residues 292–293 (DR), Thr-356, 375–377 (EES), Lys-388, and Arg-524.

The protein belongs to the phosphohexose mutase family. It depends on Mg(2+) as a cofactor.

The protein resides in the cytoplasm. The catalysed reaction is alpha-D-glucose 1-phosphate = alpha-D-glucose 6-phosphate. This enzyme participates in both the breakdown and synthesis of glucose. The protein is Phosphoglucomutase-1 (pgmA) of Dictyostelium discoideum (Social amoeba).